The chain runs to 476 residues: Serine/threonine-protein kinase Chk1 (476 aa).

One can recognise a Protein kinase domain in the interval 9-265 (WDLVQTLGEG…IPDIKKDRWY (257 aa)). ATP contacts are provided by residues 15 to 23 (LGEGAYGEV) and lysine 38. Aspartate 130 (proton acceptor) is an active-site residue. A disordered region spans residues 272-329 (GTKRGRVSSGGVTESPGALPKHIRSDTDFSPVKSALGEDKASYSTSQPEPGTGGALWD). Residue serine 280 is modified to Phosphoserine; by PKB/AKT1. Serine 296 carries the post-translational modification Phosphoserine. At serine 317 the chain carries Phosphoserine; by ATM and ATR. Serine 345 is modified (phosphoserine). An autoinhibitory region region spans residues 391-476 (RSLRDVCEKM…STQKVWLPPP (86 aa)).

This sequence belongs to the protein kinase superfamily. CAMK Ser/Thr protein kinase family. NIM1 subfamily. Phosphorylated by ATR in a RAD17-dependent manner in response to ultraviolet irradiation and inhibition of DNA replication. Phosphorylated by ATM in response to ionizing irradiation. Phosphorylation at Ser-345 induces a change in the conformation of the protein and activates the kinase activity. Phosphorylation at Ser-345 also increases binding to 14-3-3 proteins and promotes nuclear retention.

The protein resides in the nucleus. It is found in the chromosome. It localises to the cytoplasm. The protein localises to the cytoskeleton. Its subcellular location is the microtubule organizing center. The protein resides in the centrosome. The enzyme catalyses L-seryl-[protein] + ATP = O-phospho-L-seryl-[protein] + ADP + H(+). It carries out the reaction L-threonyl-[protein] + ATP = O-phospho-L-threonyl-[protein] + ADP + H(+). Its activity is regulated as follows. Activated through phosphorylation by atr or atm in response to DNA damage or inhibition of DNA replication. In terms of biological role, serine/threonine-protein kinase which is required for checkpoint-mediated cell cycle arrest and activation of DNA repair in response to the presence of DNA damage or unreplicated DNA. May also negatively regulate cell cycle progression during unperturbed cell cycles. This regulation is achieved by a number of mechanisms that together help to preserve the integrity of the genome. Recognizes the substrate consensus sequence [R-X-X-S/T]. Binds to and phosphorylates CDC25A, CDC25B and CDC25C. This inhibits their activity through proteasomal degradation, nucleo-cytoplasmic shuttling and inhibition by proteins of the 13-3-3 family. Inhibition of CDC25 leads to increased inhibitory tyrosine phosphorylation of CDK-cyclin complexes and blocks cell cycle progression. May promote DNA repair, regulate chromatin assembly and the transcription of genes that regulate cell-cycle progression. May also play a role in replication fork maintenance. The polypeptide is Serine/threonine-protein kinase Chk1 (CHEK1) (Gallus gallus (Chicken)).